The primary structure comprises 450 residues: Tubulin beta-3 chain (450 aa).

GTP is bound by residues Gln11, Glu69, Ser138, Gly142, Thr143, Gly144, Asn204, and Asn226. Residue Glu69 participates in Mg(2+) binding. The disordered stretch occupies residues 420–450 (SEYQQYQDATADEEGDYEDEEEGEYQQEEEY). Positions 429 to 450 (TADEEGDYEDEEEGEYQQEEEY) are enriched in acidic residues.

The protein belongs to the tubulin family. In terms of assembly, dimer of alpha and beta chains. A typical microtubule is a hollow water-filled tube with an outer diameter of 25 nm and an inner diameter of 15 nM. Alpha-beta heterodimers associate head-to-tail to form protofilaments running lengthwise along the microtubule wall with the beta-tubulin subunit facing the microtubule plus end conferring a structural polarity. Microtubules usually have 13 protofilaments but different protofilament numbers can be found in some organisms and specialized cells. Mg(2+) serves as cofactor.

The protein localises to the cytoplasm. It is found in the cytoskeleton. Functionally, tubulin is the major constituent of microtubules, a cylinder consisting of laterally associated linear protofilaments composed of alpha- and beta-tubulin heterodimers. Microtubules grow by the addition of GTP-tubulin dimers to the microtubule end, where a stabilizing cap forms. Below the cap, tubulin dimers are in GDP-bound state, owing to GTPase activity of alpha-tubulin. The protein is Tubulin beta-3 chain (TUBB3) of Arabidopsis thaliana (Mouse-ear cress).